Consider the following 1581-residue polypeptide: Ankyrin repeat domain-containing protein 26 (1581 aa).

Residues 1 to 22 (MKKIFGFRSKGPSPLGPSARPR) form a disordered region. A Phosphoserine modification is found at serine 13. ANK repeat units follow at residues 46 to 76 (KDMGKIHKAASVGDVAKVQHILILGKSGVND), 80 to 109 (KDRTALHLACAYGHPEVVTLLVERKCEIDA), 113 to 142 (ESSTALIKAVQCQEEECAAILLDHGADPNV), 146 to 175 (SGNTALHYAVYSENTSMAAKLLAHNANIEA), and 179 to 208 (DDLTPMLLAVKENKQHIVEFLVKKKASIHA). Disordered stretches follow at residues 225-270 (RLQR…FDNK), 299-343 (LDNG…PVEG), 361-381 (SASQEQPNHDNLTRADGWHKS), and 488-652 (VLNK…QTAA). Residues 229–250 (SENSNPVDNGSEDGSLTRSYNT) are compositionally biased toward polar residues. Phosphoserine is present on residues serine 239 and serine 260. The span at 308–319 (SDSPSESEDAIE) shows a compositional bias: acidic residues. The span at 327–337 (RVQTLSPSRQS) shows a compositional bias: polar residues. Basic and acidic residues predominate over residues 367-381 (PNHDNLTRADGWHKS). Polar residues predominate over residues 491 to 504 (KTETVGMTDAQTFK). Basic and acidic residues-rich tracts occupy residues 505-516 (SEPESVSREEQT), 524-538 (SQQKVEEKRKYKNNE), and 585-601 (KEAKKMENEKWVSREPA). Serine 511 bears the Phosphoserine mark. Coiled-coil stretches lie at residues 715-845 (RSHC…NARM), 876-1345 (HEKE…MVEH), 1396-1470 (RSQM…RSLL), and 1521-1550 (LTKMHQELEKSINRELKEATAELESEFCRV).

In terms of assembly, interacts with TRIO. Interacts with GPS2. Interacts with CCDC85B. Interacts with HMMR. Widely expressed. Expressed in the arcuate and ventromedial nuclei within the hypothalamus and in the ependyma and the circumventricular organs (at protein level).

It localises to the cytoplasm. Its subcellular location is the cytosol. Functionally, acts as a regulator of adipogenesis. Involved in the regulation of the feeding behavior. This chain is Ankyrin repeat domain-containing protein 26 (Ankrd26), found in Mus musculus (Mouse).